The chain runs to 109 residues: ATP-dependent Clp protease adapter protein ClpS (109 aa).

Residues 1-25 form a disordered region; it reads MSERKEGDSGAGVRSAVITQTKPKT.

It belongs to the ClpS family. As to quaternary structure, binds to the N-terminal domain of the chaperone ClpA.

Involved in the modulation of the specificity of the ClpAP-mediated ATP-dependent protein degradation. The protein is ATP-dependent Clp protease adapter protein ClpS of Phenylobacterium zucineum (strain HLK1).